We begin with the raw amino-acid sequence, 81 residues long: MLSFRADDHDVDLADAWARRLHIGRSELLRDALRRHLAALAADQDVQAYTERPLTDDENALAEIADWGPAEDWADWADAAR.

Forms a complex with cognate toxin MazF2.

Antitoxin component of a type II toxin-antitoxin (TA) system. The chain is Probable antitoxin MazE2 (mazE2) from Mycobacterium tuberculosis (strain ATCC 25618 / H37Rv).